Reading from the N-terminus, the 511-residue chain is ATP synthase subunit alpha 1 (511 aa).

Residue 174–181 participates in ATP binding; it reads GDRQTGKT.

It belongs to the ATPase alpha/beta chains family. F-type ATPases have 2 components, CF(1) - the catalytic core - and CF(0) - the membrane proton channel. CF(1) has five subunits: alpha(3), beta(3), gamma(1), delta(1), epsilon(1). CF(0) has four main subunits: a(1), b(1), b'(1) and c(9-12).

It localises to the cell inner membrane. It catalyses the reaction ATP + H2O + 4 H(+)(in) = ADP + phosphate + 5 H(+)(out). In terms of biological role, produces ATP from ADP in the presence of a proton gradient across the membrane. The alpha chain is a regulatory subunit. This chain is ATP synthase subunit alpha 1, found in Chlorobium luteolum (strain DSM 273 / BCRC 81028 / 2530) (Pelodictyon luteolum).